The primary structure comprises 255 residues: MKGVYGLRKAIIAGNWKMHNTIDESVKLVEELIPKVKEAECEVVVCPPFICLPKIREITEGTNIKVGAQNMYFEEKGAFTGEVSPLMLEKLNIDYVIIGHSERRQYFKETDQTVNKKLKAAFEHNLIPILCVGETLDEKENGVTEEVVSKQVKLGLFELKEEQVEKLVIAYEPIWAIGTGKTATSEEANEVIALIRSTVKSLYGDKVAESLRIQYGGSVKPSTIKEQMSMSDIDGALVGGASLKANDFSAIVNYK.

A substrate-binding site is contributed by 15-17 (NWK). The active-site Electrophile is the His-100. Glu-172 acts as the Proton acceptor in catalysis. Residues Gly-178, Ser-218, and 239–240 (GG) each bind substrate.

It belongs to the triosephosphate isomerase family. In terms of assembly, homodimer.

It localises to the cytoplasm. It carries out the reaction D-glyceraldehyde 3-phosphate = dihydroxyacetone phosphate. It participates in carbohydrate biosynthesis; gluconeogenesis. The protein operates within carbohydrate degradation; glycolysis; D-glyceraldehyde 3-phosphate from glycerone phosphate: step 1/1. Functionally, involved in the gluconeogenesis. Catalyzes stereospecifically the conversion of dihydroxyacetone phosphate (DHAP) to D-glyceraldehyde-3-phosphate (G3P). The chain is Triosephosphate isomerase from Clostridium tetani (strain Massachusetts / E88).